The following is a 389-amino-acid chain: D-alanine--D-alanine ligase (389 aa).

Positions 1–12 (MSTENLPQNPEQ) are enriched in polar residues. Residues 1 to 22 (MSTENLPQNPEQSPRRPPRKPR) form a disordered region. One can recognise an ATP-grasp domain in the interval 169 to 379 (KAVFTSYGLK…YPELVDRLVQ (211 aa)). 205 to 260 (AGEHGWPLFVKPARAGSSIGITKVDDLAGLDEAIEEARRHDPKILVEAALRGREIE) is a binding site for ATP. The Mg(2+) site is built by Asp333, Glu346, and Asn348.

It belongs to the D-alanine--D-alanine ligase family. Mg(2+) serves as cofactor. Mn(2+) is required as a cofactor.

The protein localises to the cytoplasm. The catalysed reaction is 2 D-alanine + ATP = D-alanyl-D-alanine + ADP + phosphate + H(+). It participates in cell wall biogenesis; peptidoglycan biosynthesis. Functionally, cell wall formation. This Streptomyces coelicolor (strain ATCC BAA-471 / A3(2) / M145) protein is D-alanine--D-alanine ligase (ddl).